Here is a 133-residue protein sequence, read N- to C-terminus: Ubiquitin-like FUBI-ribosomal protein eS30 fusion protein (133 aa).

In terms of domain architecture, Ubiquitin-like spans 1-74 (MQLFVRAQEL…LEVAGRMLGG (74 aa)). Position 125 is an N6-succinyllysine (lysine 125).

The protein in the N-terminal section; belongs to the ubiquitin family. In the C-terminal section; belongs to the eukaryotic ribosomal protein eS30 family. Component of the 40S subunit of the ribosome. Post-translationally, FUBI is cleaved from ribosomal protein S30 by the deubiquitinase USP36 before the assembly of ribosomal protein S30 into pre-40S ribosomal particles. FUBI removal from ribosomal protein S30 is a crucial event for the final maturation of pre-40S particles.

Its subcellular location is the cytoplasm. The protein localises to the nucleus. May have pro-apoptotic activity. Its function is as follows. Component of the 40S subunit of the ribosome. Contributes to the assembly and function of 40S ribosomal subunits. The protein is Ubiquitin-like FUBI-ribosomal protein eS30 fusion protein (FAU) of Oryctolagus cuniculus (Rabbit).